The chain runs to 412 residues: Non-specific lipid-transfer protein-like 2 (412 aa).

The Microbody targeting signal motif lies at 410–412 (SKI).

The protein belongs to the thiolase-like superfamily. Thiolase family. Expressed in intestine, hypodermis and body-wall muscle.

The protein localises to the peroxisome. It carries out the reaction choloyl-CoA + propanoyl-CoA = 3alpha,7alpha,12alpha-trihydroxy-24-oxo-5beta-cholestan-26-oyl-CoA + CoA. Inhibited by acetyl-CoA. Its function is as follows. Catalyzes the thiolytic cleavage of 3-ketoacyl-CoA with 8-16 carbon residues in the acyl group using a ping-pong mechanism whereby binding to 3-ketooctanoyl-CoA results in the release of acetyl-CoA and the subsequent addition of CoA produces 3-ketohexanohyl-CoA. Involved in the biosynthesis of the dauer pheromone by providing short chains of fatty acid that are attached to the ascarylose sugars of the pheromone. This Caenorhabditis elegans protein is Non-specific lipid-transfer protein-like 2.